Here is a 123-residue protein sequence, read N- to C-terminus: Large ribosomal subunit protein bL12 (123 aa).

Belongs to the bacterial ribosomal protein bL12 family. As to quaternary structure, homodimer. Part of the ribosomal stalk of the 50S ribosomal subunit. Forms a multimeric L10(L12)X complex, where L10 forms an elongated spine to which 2 to 4 L12 dimers bind in a sequential fashion. Binds GTP-bound translation factors.

Forms part of the ribosomal stalk which helps the ribosome interact with GTP-bound translation factors. Is thus essential for accurate translation. This Shewanella sp. (strain ANA-3) protein is Large ribosomal subunit protein bL12.